A 335-amino-acid chain; its full sequence is Anthranilate phosphoribosyltransferase (335 aa).

5-phospho-alpha-D-ribose 1-diphosphate-binding positions include Gly79, 82–83 (GD), Ser87, 89–92 (NIST), 107–115 (KHGNRSISS), and Ser119. An anthranilate-binding site is contributed by Gly79. Position 91 (Ser91) interacts with Mg(2+). An anthranilate-binding site is contributed by Asn110. Position 165 (Arg165) interacts with anthranilate. Mg(2+)-binding residues include Asp224 and Glu225.

It belongs to the anthranilate phosphoribosyltransferase family. Homodimer. It depends on Mg(2+) as a cofactor.

It carries out the reaction N-(5-phospho-beta-D-ribosyl)anthranilate + diphosphate = 5-phospho-alpha-D-ribose 1-diphosphate + anthranilate. The protein operates within amino-acid biosynthesis; L-tryptophan biosynthesis; L-tryptophan from chorismate: step 2/5. Its function is as follows. Catalyzes the transfer of the phosphoribosyl group of 5-phosphorylribose-1-pyrophosphate (PRPP) to anthranilate to yield N-(5'-phosphoribosyl)-anthranilate (PRA). The polypeptide is Anthranilate phosphoribosyltransferase (Streptococcus mutans serotype c (strain ATCC 700610 / UA159)).